Here is a 132-residue protein sequence, read N- to C-terminus: MAFDGAWKIDRNENYDKFMEKMGINVVKRKLAAHDNLKLIITQEGNKFTVKESSTFRNIEIVFELGVTFNYSLADGTELTGNWNLEGNKLVGKFQRVDNGKELNTVREIIGDEMVQTYVYEGVEAKRIFKKN.

Position 2 is an N-acetylalanine (alanine 2). Hexadecanoate contacts are provided by tryptophan 83 and arginine 107. The tetradecanoate site is built by tryptophan 83 and arginine 107.

The protein belongs to the calycin superfamily. Fatty-acid binding protein (FABP) family.

It localises to the cytoplasm. In terms of biological role, FABPs are thought to play a role in the intracellular transport of long-chain fatty acids and their acyl-CoA esters. FABP2 is probably involved in triglyceride-rich lipoprotein synthesis. Binds saturated long-chain fatty acids with a high affinity, but binds with a lower affinity to unsaturated long-chain fatty acids. FABP2 may also help maintain energy homeostasis by functioning as a lipid sensor. The sequence is that of Fatty acid-binding protein, intestinal (FABP2) from Sus scrofa (Pig).